The following is a 214-amino-acid chain: Calcineurin B homologous protein 3 (214 aa).

Residue Gly2 is the site of N-myristoyl glycine attachment. The region spanning 110–145 (CRKDKLRFLFNMYDTDNDSKITLEEYRKVVEELLSG) is the EF-hand domain. Asp123, Asp125, Asp127, Lys129, and Glu134 together coordinate Ca(2+).

It belongs to the calcineurin regulatory subunit family. CHP subfamily. Monomer. Homodimer.

The protein resides in the nucleus. Its subcellular location is the cytoplasm. The protein localises to the membrane. It is found in the cell membrane. It localises to the cell projection. The protein resides in the lamellipodium. Its subcellular location is the ruffle membrane. In terms of biological role, functions as an integral cofactor in cell pH regulation by controlling plasma membrane-type Na(+)/H(+) exchange activity. Promotes the induction of hematopoietic stem cell differentiation toward megakaryocytic lineage. Essential for the coupling of ERK cascade activation with the expression of ETS family genes in megakaryocytic differentiation. Also involved in granulocytic differentiation in a ERK-dependent manner. Inhibits the phosphatase activity of calcineurin. In Xenopus tropicalis (Western clawed frog), this protein is Calcineurin B homologous protein 3 (tesc).